The sequence spans 330 residues: Laforin (330 aa).

Residues 1–123 (MLFRFGVVVP…DNLVDGVYCL (123 aa)) enclose the CBM20 domain. Residue Ser25 is modified to Phosphoserine; by AMPK. Substrate contacts are provided by residues Trp32, Lys86, 102–106 (GPHHD), Asp196, Asp234, and Arg240. Residues 155 to 322 (HYSRILPNIW…QQDFSQKFGK (168 aa)) enclose the Tyrosine-protein phosphatase domain. Cys265 functions as the Phosphocysteine intermediate in the catalytic mechanism. The short motif at 265–271 (CNAGVGR) is the Glucan phosphatase signature motif CXAGXGR element. Substrate is bound by residues 266-271 (NAGVGR) and Tyr303.

This sequence belongs to the protein-tyrosine phosphatase family. As to quaternary structure, homodimer. Interacts with PPP1R3B, PPP1R3C, HIRIP5, and EPM2AIP1. Binds glycogen and Lafora bodies. Interacts with NHLRC1/malin (via the NHL repeats). Forms a complex with NHLRC1/malin and HSP70. Interacts with PPP1R3D; in the presence of NHLC1/malin the interaction leads to ubiquitination and autophagic degradation of PPP1R3D. Interacts (via the phosphatase domain) with MAPT/Tau; the interaction dephosphorylates MAPT. Interacts with PRDM8. Post-translationally, polyubiquitinated by NHLRC1/malin. In terms of processing, phosphorylation on Ser-25 by AMPK affects the phosphatase activity of the enzyme and its ability to homodimerize and interact with NHLRC1, PPP1R3C or PRKAA2. As to expression, detected in skeletal muscle and in brain (at protein level). Widely expressed. Higher levels of expression are found in heart, brain, liver, skeletal muscle and kidney.

It localises to the cytoplasm. It is found in the endoplasmic reticulum membrane. Its subcellular location is the cell membrane. The catalysed reaction is O-phospho-L-tyrosyl-[protein] + H2O = L-tyrosyl-[protein] + phosphate. The enzyme catalyses O-phospho-L-seryl-[protein] + H2O = L-seryl-[protein] + phosphate. It carries out the reaction O-phospho-L-threonyl-[protein] + H2O = L-threonyl-[protein] + phosphate. In terms of biological role, plays an important role in preventing glycogen hyperphosphorylation and the formation of insoluble aggregates, via its activity as glycogen phosphatase, and by promoting the ubiquitination of proteins involved in glycogen metabolism via its interaction with the E3 ubiquitin ligase NHLRC1/malin. Dephosphorylates phosphotyrosine and synthetic substrates, such as para-nitrophenylphosphate (pNPP), and has low activity with phosphoserine and phosphothreonine substrates (in vitro). Has also been shown to dephosphorylate MAPT. Shows strong phosphatase activity towards complex carbohydrates in vitro, avoiding glycogen hyperphosphorylation which is associated with reduced branching and formation of insoluble aggregates. Forms a complex with NHLRC1/malin and HSP70, which suppresses the cellular toxicity of misfolded proteins by promoting their degradation through the ubiquitin-proteasome system (UPS). Acts as a scaffold protein to facilitate PPP1R3C/PTG ubiquitination by NHLRC1/malin. Also promotes proteasome-independent protein degradation through the macroautophagy pathway. In Mus musculus (Mouse), this protein is Laforin (Epm2a).